A 471-amino-acid polypeptide reads, in one-letter code: UDP-glycosyltransferase CGT (471 aa).

The Proton acceptor role is filled by His24. Residue His24 participates in an anthocyanidin binding. Asp120 acts as the Charge relay in catalysis. Residue Thr143 participates in UDP-alpha-D-glucose binding. Residues 280–281 (SR) are UDP. The UDP-alpha-D-glucose site is built by Val343, Gln345, His360, Trp363, Asn364, Ser365, and Glu368. Gly383 is a binding site for an anthocyanidin. UDP-alpha-D-glucose is bound by residues Asp384 and Gln385.

Belongs to the UDP-glycosyltransferase family.

The catalysed reaction is a 3'-hydro-2'-hydroxy-beta-oxodihydrochalcone + UDP-alpha-D-glucose = a 3'-(beta-D-glucopyranosyl)-2'-hydroxy-beta-oxodihydrochalcone + UDP + H(+). In terms of biological role, UDP-glucose-dependent glucosyltransferase catalyzing the c-glucosylation of 2-hydroxyflavanones. Acts preferentially on the dibenzoylmethane tautomers formed in equilibrium with 2-hydroxyflavanones. No activity with naringenin or naringenin chalcone. The polypeptide is UDP-glycosyltransferase CGT (Oryza sativa subsp. indica (Rice)).